The sequence spans 199 residues: Transgelin-3 (199 aa).

The Calponin-homology (CH) domain occupies 24–136 (ADLENKLVDW…RTLMALGSVA (113 aa)). Position 163 is a phosphoserine (Ser163). One copy of the Calponin-like repeat lies at 174–199 (IGLQMGSNKGASQAGMTGYGMPRQIM). Positions 178 to 188 (MGSNKGASQAG) are enriched in polar residues. A disordered region spans residues 178–199 (MGSNKGASQAGMTGYGMPRQIM).

It belongs to the calponin family.

This chain is Transgelin-3 (TAGLN3), found in Bos taurus (Bovine).